The primary structure comprises 271 residues: 4-diphosphocytidyl-2-C-methyl-D-erythritol kinase (271 aa).

Lysine 17 is a catalytic residue. Residue 97–107 (PVGSGLGGGSS) coordinates ATP. Residue aspartate 137 is part of the active site.

Belongs to the GHMP kinase family. IspE subfamily.

It carries out the reaction 4-CDP-2-C-methyl-D-erythritol + ATP = 4-CDP-2-C-methyl-D-erythritol 2-phosphate + ADP + H(+). Its pathway is isoprenoid biosynthesis; isopentenyl diphosphate biosynthesis via DXP pathway; isopentenyl diphosphate from 1-deoxy-D-xylulose 5-phosphate: step 3/6. In terms of biological role, catalyzes the phosphorylation of the position 2 hydroxy group of 4-diphosphocytidyl-2C-methyl-D-erythritol. The protein is 4-diphosphocytidyl-2-C-methyl-D-erythritol kinase of Thermotoga maritima (strain ATCC 43589 / DSM 3109 / JCM 10099 / NBRC 100826 / MSB8).